The chain runs to 1078 residues: Disheveled-associated activator of morphogenesis 1 (1078 aa).

S34 bears the Phosphoserine mark. Positions 45–420 (LPMPPVEELD…QIVIQNDKGQ (376 aa)) constitute a GBD/FH3 domain. The stretch at 437–526 (RMLVNENEVK…ELSRRAVCAS (90 aa)) forms a coiled coil. Disordered regions lie at residues 456-480 (RKEH…TQEK) and 524-585 (CASI…PLGA). The 72-residue stretch at 528–599 (PGGPSPGAPG…PGAPMGLALK (72 aa)) folds into the FH1 domain. 2 stretches are compositionally biased toward pro residues: residues 530-539 (GPSPGAPGGP) and 548-585 (LLPP…PLGA). The region spanning 600 to 1009 (KKSIPQPTNA…EERRARMEAQ (410 aa)) is the FH2 domain. The segment at 693 to 702 (AQNCNILLSR) is actin-binding. Basic and acidic residues predominate over residues 987-1027 (KQENENMRKKKEEEERRARMEAQLKEQRERERKMRKAKENS). Disordered regions lie at residues 987–1034 (KQEN…GEFD) and 1055–1078 (RNRK…KLNF). A phosphoserine mark is found at S1027 and S1030. A DAD domain is found at 1027 to 1058 (SEESGEFDDLVSALRSGEVFDKDLSKLKRNRK). The segment covering 1067-1078 (SSRERPITKLNF) has biased composition (basic and acidic residues).

This sequence belongs to the formin homology family. Homodimer. Interacts with CIP4, FNBP1 and FNBP1L. Interacts with the SH3 domains of Abl, BTK, endophilin, spectrin and SRC. Binds specifically to GTP-bound CDC42 and RHOA. Interacts with INTU; INTU mediates the indirect interaction between DAAM1 and NPHP4. Interacts (via coiled coil domain) with KANK1 (via coiled coil domain). As to expression, expressed in all tissues examined.

The protein resides in the cytoplasm. It localises to the cytoskeleton. It is found in the cilium basal body. Binds to disheveled (Dvl) and Rho, and mediates Wnt-induced Dvl-Rho complex formation. May play a role as a scaffolding protein to recruit Rho-GDP and Rho-GEF, thereby enhancing Rho-GTP formation. Can direct nucleation and elongation of new actin filaments. Involved in building functional cilia. Involved in the organization of the subapical actin network in multiciliated epithelial cells. Together with DAAM2, required for myocardial maturation and sarcomere assembly. During cell division, may regulate RHOA activation that signals spindle orientation and chromosomal segregation. This Homo sapiens (Human) protein is Disheveled-associated activator of morphogenesis 1 (DAAM1).